Reading from the N-terminus, the 61-residue chain is Small ribosomal subunit protein uS14 (61 aa).

4 residues coordinate Zn(2+): Cys-24, Cys-27, Cys-40, and Cys-43.

It belongs to the universal ribosomal protein uS14 family. Zinc-binding uS14 subfamily. As to quaternary structure, part of the 30S ribosomal subunit. Contacts proteins S3 and S10. Requires Zn(2+) as cofactor.

Binds 16S rRNA, required for the assembly of 30S particles and may also be responsible for determining the conformation of the 16S rRNA at the A site. The polypeptide is Small ribosomal subunit protein uS14 (Anaeromyxobacter sp. (strain Fw109-5)).